Consider the following 502-residue polypeptide: ATP synthase subunit alpha, chloroplastic (502 aa).

Residue 170 to 177 participates in ATP binding; it reads GDRQTGKS.

This sequence belongs to the ATPase alpha/beta chains family. In terms of assembly, F-type ATPases have 2 components, CF(1) - the catalytic core - and CF(0) - the membrane proton channel. CF(1) has five subunits: alpha(3), beta(3), gamma(1), delta(1), epsilon(1). CF(0) has four main subunits: a, b, b' and c.

It is found in the plastid. Its subcellular location is the chloroplast thylakoid membrane. It carries out the reaction ATP + H2O + 4 H(+)(in) = ADP + phosphate + 5 H(+)(out). In terms of biological role, produces ATP from ADP in the presence of a proton gradient across the membrane. The alpha chain is a regulatory subunit. The polypeptide is ATP synthase subunit alpha, chloroplastic (Guillardia theta (Cryptophyte)).